Reading from the N-terminus, the 142-residue chain is Large ribosomal subunit protein uL11 (142 aa).

This sequence belongs to the universal ribosomal protein uL11 family. As to quaternary structure, part of the ribosomal stalk of the 50S ribosomal subunit. Interacts with L10 and the large rRNA to form the base of the stalk. L10 forms an elongated spine to which L12 dimers bind in a sequential fashion forming a multimeric L10(L12)X complex. Post-translationally, one or more lysine residues are methylated.

Functionally, forms part of the ribosomal stalk which helps the ribosome interact with GTP-bound translation factors. This chain is Large ribosomal subunit protein uL11, found in Xanthomonas axonopodis pv. citri (strain 306).